We begin with the raw amino-acid sequence, 273 residues long: Bifunctional protein FolD (273 aa).

Residues 149 to 151 (GLG) and Val-215 each bind NADP(+).

The protein belongs to the tetrahydrofolate dehydrogenase/cyclohydrolase family. As to quaternary structure, homodimer.

It carries out the reaction (6R)-5,10-methylene-5,6,7,8-tetrahydrofolate + NADP(+) = (6R)-5,10-methenyltetrahydrofolate + NADPH. The catalysed reaction is (6R)-5,10-methenyltetrahydrofolate + H2O = (6R)-10-formyltetrahydrofolate + H(+). It functions in the pathway one-carbon metabolism; tetrahydrofolate interconversion. Catalyzes the oxidation of 5,10-methylenetetrahydrofolate to 5,10-methenyltetrahydrofolate and then the hydrolysis of 5,10-methenyltetrahydrofolate to 10-formyltetrahydrofolate. This Mycoplasma genitalium (strain ATCC 33530 / DSM 19775 / NCTC 10195 / G37) (Mycoplasmoides genitalium) protein is Bifunctional protein FolD.